Reading from the N-terminus, the 358-residue chain is Biotin synthase (358 aa).

The Radical SAM core domain occupies 47 to 306 (KNNSKIKLCA…ALYKIIMPYA (260 aa)). Positions 65, 69, and 72 each coordinate [4Fe-4S] cluster. Residues serine 142, cysteine 174, cysteine 233, and arginine 309 each coordinate [2Fe-2S] cluster.

Belongs to the radical SAM superfamily. Biotin synthase family. Homodimer. The cofactor is [4Fe-4S] cluster. [2Fe-2S] cluster serves as cofactor.

The enzyme catalyses (4R,5S)-dethiobiotin + (sulfur carrier)-SH + 2 reduced [2Fe-2S]-[ferredoxin] + 2 S-adenosyl-L-methionine = (sulfur carrier)-H + biotin + 2 5'-deoxyadenosine + 2 L-methionine + 2 oxidized [2Fe-2S]-[ferredoxin]. It participates in cofactor biosynthesis; biotin biosynthesis; biotin from 7,8-diaminononanoate: step 2/2. Its function is as follows. Catalyzes the conversion of dethiobiotin (DTB) to biotin by the insertion of a sulfur atom into dethiobiotin via a radical-based mechanism. In Methanocaldococcus jannaschii (strain ATCC 43067 / DSM 2661 / JAL-1 / JCM 10045 / NBRC 100440) (Methanococcus jannaschii), this protein is Biotin synthase.